Reading from the N-terminus, the 311-residue chain is Olfactory receptor 14I1 (311 aa).

Residues 1–26 lie on the Extracellular side of the membrane; the sequence is MDNLTKVTEFLLMEFSGIWELQVLHA. Residue Asn3 is glycosylated (N-linked (GlcNAc...) asparagine). Residues 27-47 form a helical membrane-spanning segment; that stretch reads GLFLLIYLAVLVGNLLIIAVI. Residues 48-55 are Cytoplasmic-facing; that stretch reads TLDQHLHT. A helical transmembrane segment spans residues 56 to 76; the sequence is PMYFFLKNLSVLDLCYISVTV. The Extracellular portion of the chain corresponds to 77-92; that stretch reads PKSIRNSLTRRSSISY. The helical transmembrane segment at 93–113 threads the bilayer; it reads LGCVAQVYFFSAFASAELAFL. An intrachain disulfide couples Cys95 to Cys188. At 114 to 141 the chain is on the cytoplasmic side; the sequence is TVMSYDRYVAICHPLQYRAVMTSGGCYQ. A helical membrane pass occupies residues 142–162; that stretch reads MAVTTWLSCFSYAAVHTGNMF. Over 163-189 the chain is Extracellular; the sequence is REHVCRSSVIHQFFRDIPHVLALVSCE. Residues 190–210 traverse the membrane as a helical segment; it reads VFFVEFLTLALSSCLVLGCFI. Topologically, residues 211–241 are cytoplasmic; sequence LMMISYFQIFSTVLRIPSGQSRAKAFSTCSP. A helical membrane pass occupies residues 242–262; it reads QLIVIMLFLTTGLFAALGPIA. Residues 263–269 lie on the Extracellular side of the membrane; that stretch reads KALSIQD. A helical membrane pass occupies residues 270-290; sequence LVIALTYTVLPPFLNPIIYSL. The Cytoplasmic portion of the chain corresponds to 291 to 311; it reads RNKEIKTAMWRLFVKIYFLQK.

It belongs to the G-protein coupled receptor 1 family.

Its subcellular location is the cell membrane. In terms of biological role, odorant receptor. This Homo sapiens (Human) protein is Olfactory receptor 14I1 (OR14I1).